Consider the following 228-residue polypeptide: Potassium/proton antiporter CemA (228 aa).

3 consecutive transmembrane segments (helical) span residues 6-26 (FIPL…SFSF), 113-133 (IICF…LFIL), and 188-208 (IISG…KYWI).

Belongs to the CemA family.

The protein resides in the plastid. It is found in the chloroplast inner membrane. It carries out the reaction K(+)(in) + H(+)(out) = K(+)(out) + H(+)(in). Its function is as follows. Contributes to K(+)/H(+) antiport activity by supporting proton efflux to control proton extrusion and homeostasis in chloroplasts in a light-dependent manner to modulate photosynthesis. Prevents excessive induction of non-photochemical quenching (NPQ) under continuous-light conditions. Indirectly promotes efficient inorganic carbon uptake into chloroplasts. The protein is Potassium/proton antiporter CemA of Populus alba (White poplar).